The primary structure comprises 416 residues: MSSNCTSTTAVAVAPLSASKTKTKKKHFVCQKVKLFRASEPILSVLMWGVNHTINELSNVPVPVMLMPDDFKAYSKIKVDNHLFNKENLPSRFKFKEYCPMVFRNLRERFGIDDQDYQNSVTRSAPINSDSQGRCGTRFLTTYDRRFVIKTVSSEDVAEMHNILKKYHQFIVECHGNTLLPQFLGMYRLTVDGVETYMVVTRNVFSHRLTVHRKYDLKGSTVAREASDKEKAKDLPTFKDNDFLNEGQKLRVGEESKKNFLEKLKRDVEFLAQLKIMDYSLLVGIHDVDRAEQEETEVEDRAEEEECENDGVGGGLLCSYGTPPDSPGNLLSFPRFFGPGEFDPSVDVYAMKSHESAPKKEVYFMAIIDILTPYDAKKKAAHAAKTVKHGAGAEISTVNPEQYSKRFNEFMSNILT.

Position 2 is an N-acetylserine (Ser-2). Thr-8 carries the phosphothreonine modification. Ser-19 bears the Phosphoserine mark. The 378-residue stretch at 38 to 415 (ASEPILSVLM…RFNEFMSNIL (378 aa)) folds into the PIPK domain. The required for interaction with PIP5K1A stretch occupies residues 64–70 (VMLMPDD). Lys-94 and Lys-150 each carry N6-acetyllysine. Residues 202 to 204 (RNV) and Lys-214 each bind ATP. GTP-binding positions include 203–204 (NV) and Lys-214. Position 322 is a phosphothreonine (Thr-322). Ser-326 bears the Phosphoserine mark. Asp-369 contacts GTP.

Homodimer. Binds TNFRSF1A. Interacts with PIP4K2A; the interaction suppresses ubiquitination by the SPOP/CUL3 complex. Probably interacts with PIP5K1A; the interaction inhibits PIP5K1A kinase activity. In terms of processing, ubiquitinated by the SPOP/CUL3 complex. Ubiquitination is stimulated by PtdIns5P levels. Post-translationally, phosphorylated on serine residues.

The protein resides in the endoplasmic reticulum membrane. Its subcellular location is the cell membrane. It is found in the nucleus. It localises to the cytoplasm. It carries out the reaction a 1,2-diacyl-sn-glycero-3-phospho-(1D-myo-inositol-5-phosphate) + ATP = a 1,2-diacyl-sn-glycero-3-phospho-(1D-myo-inositol-4,5-bisphosphate) + ADP + H(+). The catalysed reaction is 1,2-dihexadecanoyl-sn-glycero-3-phospho-(1D-myo-inositol-5-phosphate) + ATP = 1,2-dihexadecanoyl-sn-glycero-3-phospho-(1D-myo-inositol-4,5-bisphosphate) + ADP + H(+). The enzyme catalyses 1,2-dihexadecanoyl-sn-glycero-3-phospho-(1D-myo-inositol-5-phosphate) + GTP = 1,2-dihexadecanoyl-sn-glycero-3-phospho-(1D-myo-inositol-4,5-bisphosphate) + GDP + H(+). Functionally, participates in the biosynthesis of phosphatidylinositol 4,5-bisphosphate. Preferentially utilizes GTP, rather than ATP, for PI(5)P phosphorylation and its activity reflects changes in direct proportion to the physiological GTP concentration. Its GTP-sensing activity is critical for metabolic adaptation. PIP4Ks negatively regulate insulin signaling through a catalytic-independent mechanism. They interact with PIP5Ks and suppress PIP5K-mediated PtdIns(4,5)P2 synthesis and insulin-dependent conversion to PtdIns(3,4,5)P3. The chain is Phosphatidylinositol 5-phosphate 4-kinase type-2 beta from Rattus norvegicus (Rat).